The primary structure comprises 137 residues: Basic phospholipase A2 homolog MT1 (137 aa).

The first 16 residues, 1-16 (MRTLWIVALLLVGVEG), serve as a signal peptide directing secretion. Cystine bridges form between Cys-42–Cys-131, Cys-44–Cys-60, Cys-59–Cys-111, Cys-65–Cys-137, Cys-66–Cys-104, Cys-73–Cys-97, and Cys-91–Cys-102. Residues 121–133 (KKYKAYFKFKCKK) are important for membrane-damaging activities in eukaryotes and bacteria; heparin-binding.

This sequence belongs to the phospholipase A2 family. Group II subfamily. K49 sub-subfamily. Binds to heparin. In terms of tissue distribution, expressed by the venom gland.

It localises to the secreted. With respect to regulation, heparin and wedelolactone inhibit the myotoxic activity. The PLA2 inhibitor, para-bromophenacyl bromide (BPB), inhibits the myotoxic activity. Snake venom phospholipase A2 homolog that lacks enzymatic activity. Has myotoxic activities. A model of myotoxic mechanism has been proposed: an apo Lys49-PLA2 is activated by the entrance of a hydrophobic molecule (e.g. fatty acid) at the hydrophobic channel of the protein leading to a reorientation of a monomer. This reorientation causes a transition between 'inactive' to 'active' states, causing alignment of C-terminal and membrane-docking sites (MDoS) side-by-side and putting the membrane-disruption sites (MDiS) in the same plane, exposed to solvent and in a symmetric position for both monomers. The MDoS region stabilizes the toxin on membrane by the interaction of charged residues with phospholipid head groups. Subsequently, the MDiS region destabilizes the membrane with penetration of hydrophobic residues. This insertion causes a disorganization of the membrane, allowing an uncontrolled influx of ions (i.e. calcium and sodium), and eventually triggering irreversible intracellular alterations and cell death. The polypeptide is Basic phospholipase A2 homolog MT1 (Agkistrodon contortrix laticinctus (Broad-banded copperhead)).